The primary structure comprises 309 residues: Mitochondrial fission regulator 1-like (309 aa).

Residues 189–221 are disordered; the sequence is DVTEEDEEEEEEEDREEEEEDVSELVPDPMPPV. Over residues 190 to 211 the composition is skewed to acidic residues; that stretch reads VTEEDEEEEEEEDREEEEEDVS. S253 carries the phosphoserine modification.

This sequence belongs to the MTFR1 family.

The protein localises to the mitochondrion outer membrane. Functionally, mitochondrial protein required for adaptation of miochondrial dynamics to metabolic changes. Regulates mitochondrial morphology at steady state and mediates AMPK-dependent stress-induced mitochondrial fragmentation via the control of OPA1 levels. This Danio rerio (Zebrafish) protein is Mitochondrial fission regulator 1-like (mtfr1l).